Consider the following 93-residue polypeptide: Large ribosomal subunit protein uL23cy (93 aa).

It belongs to the universal ribosomal protein uL23 family. As to quaternary structure, part of the 50S ribosomal subunit.

The protein resides in the plastid. It is found in the chloroplast. Binds to 23S rRNA. This is Large ribosomal subunit protein uL23cy (rpl23-B) from Sorghum bicolor (Sorghum).